A 206-amino-acid polypeptide reads, in one-letter code: Small ribosomal subunit protein uS4 (206 aa).

One can recognise an S4 RNA-binding domain in the interval 96-156; it reads TRLDNVVYRM…EKSRTQARIK (61 aa).

This sequence belongs to the universal ribosomal protein uS4 family. In terms of assembly, part of the 30S ribosomal subunit. Contacts protein S5. The interaction surface between S4 and S5 is involved in control of translational fidelity.

In terms of biological role, one of the primary rRNA binding proteins, it binds directly to 16S rRNA where it nucleates assembly of the body of the 30S subunit. With S5 and S12 plays an important role in translational accuracy. This chain is Small ribosomal subunit protein uS4, found in Shewanella sp. (strain ANA-3).